The chain runs to 146 residues: Hemoglobin subunit beta (146 aa).

The 145-residue stretch at 2 to 146 (HWSAEEKQLI…VAHALARKYH (145 aa)) folds into the Globin domain. Positions 63 and 92 each coordinate heme b.

Belongs to the globin family. Heterotetramer of two alpha chains and two beta chains. Red blood cells.

Functionally, involved in oxygen transport from the lung to the various peripheral tissues. The polypeptide is Hemoglobin subunit beta (HBB) (Streptopelia orientalis (Eastern turtle dove)).